We begin with the raw amino-acid sequence, 323 residues long: Pseudouridine-5'-phosphate glycosidase (323 aa).

The Proton donor role is filled by E43. Substrate-binding residues include K104 and V124. D156 contributes to the Mn(2+) binding site. 158–160 contributes to the substrate binding site; the sequence is SAD. Catalysis depends on K177, which acts as the Nucleophile.

The protein belongs to the pseudouridine-5'-phosphate glycosidase family. As to quaternary structure, homotrimer. The cofactor is Mn(2+).

The catalysed reaction is D-ribose 5-phosphate + uracil = psi-UMP + H2O. In terms of biological role, catalyzes the reversible cleavage of pseudouridine 5'-phosphate (PsiMP) to ribose 5-phosphate and uracil. Functions biologically in the cleavage direction, as part of a pseudouridine degradation pathway. This is Pseudouridine-5'-phosphate glycosidase from Streptomyces griseus subsp. griseus (strain JCM 4626 / CBS 651.72 / NBRC 13350 / KCC S-0626 / ISP 5235).